The primary structure comprises 273 residues: Putative phosphoenolpyruvate synthase regulatory protein (273 aa).

Residue alanine 153–threonine 160 coordinates ADP.

Belongs to the pyruvate, phosphate/water dikinase regulatory protein family. PSRP subfamily.

It catalyses the reaction [pyruvate, water dikinase] + ADP = [pyruvate, water dikinase]-phosphate + AMP + H(+). The catalysed reaction is [pyruvate, water dikinase]-phosphate + phosphate + H(+) = [pyruvate, water dikinase] + diphosphate. Its function is as follows. Bifunctional serine/threonine kinase and phosphorylase involved in the regulation of the phosphoenolpyruvate synthase (PEPS) by catalyzing its phosphorylation/dephosphorylation. The polypeptide is Putative phosphoenolpyruvate synthase regulatory protein (Xanthomonas oryzae pv. oryzae (strain MAFF 311018)).